The following is a 184-amino-acid chain: Pyridoxal 5'-phosphate synthase subunit PdxT (184 aa).

Position 46 to 48 (46 to 48 (GES)) interacts with L-glutamine. Residue Cys75 is the Nucleophile of the active site. L-glutamine contacts are provided by residues Arg101 and 129–130 (IR). Active-site charge relay system residues include His165 and Glu167.

Belongs to the glutaminase PdxT/SNO family. As to quaternary structure, in the presence of PdxS, forms a dodecamer of heterodimers. Only shows activity in the heterodimer.

It catalyses the reaction aldehydo-D-ribose 5-phosphate + D-glyceraldehyde 3-phosphate + L-glutamine = pyridoxal 5'-phosphate + L-glutamate + phosphate + 3 H2O + H(+). The catalysed reaction is L-glutamine + H2O = L-glutamate + NH4(+). Its pathway is cofactor biosynthesis; pyridoxal 5'-phosphate biosynthesis. Its function is as follows. Catalyzes the hydrolysis of glutamine to glutamate and ammonia as part of the biosynthesis of pyridoxal 5'-phosphate. The resulting ammonia molecule is channeled to the active site of PdxS. This Staphylococcus haemolyticus (strain JCSC1435) protein is Pyridoxal 5'-phosphate synthase subunit PdxT.